The sequence spans 148 residues: Oleosin 16 kDa (148 aa).

The tract at residues 1–21 is disordered; that stretch reads MADQHRGVIGGGGYGDRGGQE. Alanine 2 is subject to N-acetylalanine. Positions 2–34 are polar; it reads ADQHRGVIGGGGYGDRGGQEQQEKQPFMMTALK. The span at 8–17 shows a compositional bias: gly residues; that stretch reads VIGGGGYGDR. Residues 35–106 form a hydrophobic region; that stretch reads TVTAATAGGS…AALSVFSWMY (72 aa). 3 helical membrane passes run 43 to 63, 66 to 86, and 87 to 107; these read GSMLVLSGLILAGTVIALTVA, VLVIFSPVLVPAAIALALMAA, and GFVTSGGLGVAALSVFSWMYK.

Belongs to the oleosin family.

Its subcellular location is the lipid droplet. It localises to the membrane. May have a structural role to stabilize the lipid body during desiccation of the seed by preventing coalescence of the oil. Probably interacts with both lipid and phospholipid moieties of lipid bodies. May also provide recognition signals for specific lipase anchorage in lipolysis during seedling growth. The protein is Oleosin 16 kDa (OLE16) of Oryza sativa subsp. japonica (Rice).